Here is a 339-residue protein sequence, read N- to C-terminus: uncharacterized protein (339 aa).

Polar residues predominate over residues 1–12 (MDIDLNNQTDNN). Positions 1–30 (MDIDLNNQTDNNELIVEDTENPKNPNSTNI) are disordered.

This is an uncharacterized protein from Acanthamoeba polyphaga (Amoeba).